The following is a 133-amino-acid chain: Holo-[acyl-carrier-protein] synthase (133 aa).

2 residues coordinate Mg(2+): Asp-8 and Glu-56.

The protein belongs to the P-Pant transferase superfamily. AcpS family. The cofactor is Mg(2+).

Its subcellular location is the cytoplasm. The catalysed reaction is apo-[ACP] + CoA = holo-[ACP] + adenosine 3',5'-bisphosphate + H(+). Its function is as follows. Transfers the 4'-phosphopantetheine moiety from coenzyme A to a Ser of acyl-carrier-protein. The chain is Holo-[acyl-carrier-protein] synthase from Deinococcus radiodurans (strain ATCC 13939 / DSM 20539 / JCM 16871 / CCUG 27074 / LMG 4051 / NBRC 15346 / NCIMB 9279 / VKM B-1422 / R1).